The following is a 183-amino-acid chain: NAD(P)H-quinone oxidoreductase subunit I, chloroplastic (183 aa).

4Fe-4S ferredoxin-type domains follow at residues 55 to 84 and 95 to 124; these read GRIH…VDWE and TSYS…MTEE. Positions 64, 67, 70, 74, 104, 107, 110, and 114 each coordinate [4Fe-4S] cluster.

This sequence belongs to the complex I 23 kDa subunit family. As to quaternary structure, NDH is composed of at least 16 different subunits, 5 of which are encoded in the nucleus. Requires [4Fe-4S] cluster as cofactor.

It localises to the plastid. The protein localises to the chloroplast thylakoid membrane. The enzyme catalyses a plastoquinone + NADH + (n+1) H(+)(in) = a plastoquinol + NAD(+) + n H(+)(out). It catalyses the reaction a plastoquinone + NADPH + (n+1) H(+)(in) = a plastoquinol + NADP(+) + n H(+)(out). NDH shuttles electrons from NAD(P)H:plastoquinone, via FMN and iron-sulfur (Fe-S) centers, to quinones in the photosynthetic chain and possibly in a chloroplast respiratory chain. The immediate electron acceptor for the enzyme in this species is believed to be plastoquinone. Couples the redox reaction to proton translocation, and thus conserves the redox energy in a proton gradient. In Huperzia lucidula (Shining clubmoss), this protein is NAD(P)H-quinone oxidoreductase subunit I, chloroplastic.